A 154-amino-acid polypeptide reads, in one-letter code: Myoglobin (154 aa).

The Globin domain occupies 2-148 (GLSDGEWQLV…FRKDIAAKYK (147 aa)). Serine 4 is subject to Phosphoserine. Nitrite is bound at residue histidine 65. Histidine 65 lines the O2 pocket. At threonine 68 the chain carries Phosphothreonine. Histidine 94 provides a ligand contact to heme b.

The protein belongs to the globin family. Monomeric.

It localises to the cytoplasm. The protein localises to the sarcoplasm. It catalyses the reaction Fe(III)-heme b-[protein] + nitric oxide + H2O = Fe(II)-heme b-[protein] + nitrite + 2 H(+). The catalysed reaction is H2O2 + AH2 = A + 2 H2O. Its function is as follows. Monomeric heme protein which primary function is to store oxygen and facilitate its diffusion within muscle tissues. Reversibly binds oxygen through a pentacoordinated heme iron and enables its timely and efficient release as needed during periods of heightened demand. Depending on the oxidative conditions of tissues and cells, and in addition to its ability to bind oxygen, it also has a nitrite reductase activity whereby it regulates the production of bioactive nitric oxide. Under stress conditions, like hypoxia and anoxia, it also protects cells against reactive oxygen species thanks to its pseudoperoxidase activity. This chain is Myoglobin (MB), found in Delphinus delphis (Short-beaked common dolphin).